A 494-amino-acid polypeptide reads, in one-letter code: UPF0371 protein SSA_0208 (494 aa).

This sequence belongs to the UPF0371 family.

This is UPF0371 protein SSA_0208 from Streptococcus sanguinis (strain SK36).